The sequence spans 148 residues: Large ribosomal subunit protein bL9 (148 aa).

In terms of assembly, part of the 50S ribosomal subunit.

In terms of biological role, binds to the 23S rRNA. Extends more that 50 Angstroms beyond the surface of the 70S ribosome. The chain is Large ribosomal subunit protein bL9 (rplI) from Thermus thermophilus (strain ATCC 27634 / DSM 579 / HB8).